A 267-amino-acid chain; its full sequence is Eukaryotic translation initiation factor 3 subunit J (267 aa).

Disordered regions lie at residues 1 to 118 (MAPS…DLKH) and 221 to 241 (MREE…KTKV). Residues 28 to 46 (DEEEEDVLDSWDAAEDSEV) are compositionally biased toward acidic residues. Positions 44 to 99 (SEVEREKAAKAAAAAAKAEAEAAAKKKSKAQRIEERKQERKKLAEANESDEDSEED) form a coiled coil. The segment covering 74–88 (QRIEERKQERKKLAE) has biased composition (basic and acidic residues). The span at 90–100 (NESDEDSEEDE) shows a compositional bias: acidic residues. Basic and acidic residues-rich tracts occupy residues 108 to 118 (RRTEKEGDLKH) and 221 to 231 (MREERAADKGN).

This sequence belongs to the eIF-3 subunit J family. In terms of assembly, component of the eukaryotic translation initiation factor 3 (eIF-3) complex.

Its subcellular location is the cytoplasm. Component of the eukaryotic translation initiation factor 3 (eIF-3) complex, which is involved in protein synthesis of a specialized repertoire of mRNAs and, together with other initiation factors, stimulates binding of mRNA and methionyl-tRNAi to the 40S ribosome. The eIF-3 complex specifically targets and initiates translation of a subset of mRNAs involved in cell proliferation. This is Eukaryotic translation initiation factor 3 subunit J (hcr1) from Aspergillus fumigatus (strain CBS 144.89 / FGSC A1163 / CEA10) (Neosartorya fumigata).